We begin with the raw amino-acid sequence, 1348 residues long: Phosphoribosylformylglycinamidine synthase (1348 aa).

ATP-binding positions include 300–311 (GAATGAGGEIRD) and Ala-701. Asp-702, Glu-741, Asn-745, and Asp-941 together coordinate Mg(2+). Ser-943 contacts ATP. Residues 1099–1348 (VAILREQGVN…MFRNARVWCG (250 aa)) form the Glutamine amidotransferase type-1 domain. The Nucleophile role is filled by Cys-1192. Catalysis depends on residues His-1313 and Glu-1315.

It in the N-terminal section; belongs to the FGAMS family. As to quaternary structure, monomer.

The protein localises to the cytoplasm. It carries out the reaction N(2)-formyl-N(1)-(5-phospho-beta-D-ribosyl)glycinamide + L-glutamine + ATP + H2O = 2-formamido-N(1)-(5-O-phospho-beta-D-ribosyl)acetamidine + L-glutamate + ADP + phosphate + H(+). It functions in the pathway purine metabolism; IMP biosynthesis via de novo pathway; 5-amino-1-(5-phospho-D-ribosyl)imidazole from N(2)-formyl-N(1)-(5-phospho-D-ribosyl)glycinamide: step 1/2. Phosphoribosylformylglycinamidine synthase involved in the purines biosynthetic pathway. Catalyzes the ATP-dependent conversion of formylglycinamide ribonucleotide (FGAR) and glutamine to yield formylglycinamidine ribonucleotide (FGAM) and glutamate. This chain is Phosphoribosylformylglycinamidine synthase, found in Xanthomonas campestris pv. campestris (strain ATCC 33913 / DSM 3586 / NCPPB 528 / LMG 568 / P 25).